Reading from the N-terminus, the 124-residue chain is Probable glycine cleavage system H protein (124 aa).

One can recognise a Lipoyl-binding domain in the interval 23–104; the sequence is VATVGITDYA…PYKNWLVKIR (82 aa). Lysine 64 bears the N6-lipoyllysine mark.

It belongs to the GcvH family. The glycine cleavage system is composed of four proteins: P, T, L and H. It depends on (R)-lipoate as a cofactor.

The glycine cleavage system catalyzes the degradation of glycine. The H protein shuttles the methylamine group of glycine from the P protein to the T protein. This Picrophilus torridus (strain ATCC 700027 / DSM 9790 / JCM 10055 / NBRC 100828 / KAW 2/3) protein is Probable glycine cleavage system H protein.